A 370-amino-acid chain; its full sequence is 3-dehydroquinate synthase (370 aa).

Residues 112 to 116 (GVIGD), 136 to 137 (TT), Lys-149, Lys-158, and 176 to 179 (TLKT) contribute to the NAD(+) site. Residues Glu-191, His-256, and His-273 each contribute to the Zn(2+) site.

The protein belongs to the sugar phosphate cyclases superfamily. Dehydroquinate synthase family. It depends on Co(2+) as a cofactor. Zn(2+) is required as a cofactor. The cofactor is NAD(+).

Its subcellular location is the cytoplasm. The catalysed reaction is 7-phospho-2-dehydro-3-deoxy-D-arabino-heptonate = 3-dehydroquinate + phosphate. It participates in metabolic intermediate biosynthesis; chorismate biosynthesis; chorismate from D-erythrose 4-phosphate and phosphoenolpyruvate: step 2/7. Its function is as follows. Catalyzes the conversion of 3-deoxy-D-arabino-heptulosonate 7-phosphate (DAHP) to dehydroquinate (DHQ). The sequence is that of 3-dehydroquinate synthase from Prochlorococcus marinus (strain MIT 9211).